The following is a 299-amino-acid chain: 4-diphosphocytidyl-2-C-methyl-D-erythritol kinase (299 aa).

The active site involves K11. An ATP-binding site is contributed by 94–104; it reads PQGGGLGGGSS. D136 is an active-site residue.

The protein belongs to the GHMP kinase family. IspE subfamily.

It carries out the reaction 4-CDP-2-C-methyl-D-erythritol + ATP = 4-CDP-2-C-methyl-D-erythritol 2-phosphate + ADP + H(+). Its pathway is isoprenoid biosynthesis; isopentenyl diphosphate biosynthesis via DXP pathway; isopentenyl diphosphate from 1-deoxy-D-xylulose 5-phosphate: step 3/6. Catalyzes the phosphorylation of the position 2 hydroxy group of 4-diphosphocytidyl-2C-methyl-D-erythritol. This Bordetella pertussis (strain Tohama I / ATCC BAA-589 / NCTC 13251) protein is 4-diphosphocytidyl-2-C-methyl-D-erythritol kinase.